The chain runs to 388 residues: MDLFEYQAKKLFAEHGVPVPTGKIATTPQQAREIATELGGKVVVKAQVKAGGRGKAGGVKVADGPDDAFEKASAILGMDIKGHTVHSVLVEQASNIAEEYYASFLLDRANRTFLAMASREGGMEIEEVAATNPEALARIHIDPLTGVDAAKAREIAVAAKLPEAAIEGASVLLVKLWEVFVKADATLVEVNPLILTGDGKVIALDGKVTLDENADFRHPENAELVDVAAVDPLEQKAKEKGLNYVKLEGQVGIIGNGAGLVMSTLDVVTYAGEEFGGQRPANFLDIGGGASAEVMANGLSIILSDPSVKSVFVNIFGGITACDAVANGIVQALAIVGDVSTPLVVRLDGNNAEEGRRILKEANLPVVKPVDTMDGAAKLAAELAAAAA.

Residues 9–236 form the ATP-grasp domain; sequence KKLFAEHGVP…VAAVDPLEQK (228 aa). ATP-binding positions include lysine 45, 52–54, glutamate 91, serine 94, and glutamate 99; that span reads GRG. Mg(2+)-binding residues include asparagine 191 and aspartate 205. Substrate-binding positions include asparagine 256 and 318-320; that span reads GIT.

The protein belongs to the succinate/malate CoA ligase beta subunit family. As to quaternary structure, heterotetramer of two alpha and two beta subunits. Mg(2+) is required as a cofactor.

The catalysed reaction is succinate + ATP + CoA = succinyl-CoA + ADP + phosphate. The enzyme catalyses GTP + succinate + CoA = succinyl-CoA + GDP + phosphate. It participates in carbohydrate metabolism; tricarboxylic acid cycle; succinate from succinyl-CoA (ligase route): step 1/1. In terms of biological role, succinyl-CoA synthetase functions in the citric acid cycle (TCA), coupling the hydrolysis of succinyl-CoA to the synthesis of either ATP or GTP and thus represents the only step of substrate-level phosphorylation in the TCA. The beta subunit provides nucleotide specificity of the enzyme and binds the substrate succinate, while the binding sites for coenzyme A and phosphate are found in the alpha subunit. The chain is Succinate--CoA ligase [ADP-forming] subunit beta from Parafrankia sp. (strain EAN1pec).